The following is a 110-amino-acid chain: Large ribosomal subunit protein P2B (110 aa).

Ser-29 carries the post-translational modification Phosphoserine. Lys-49 participates in a covalent cross-link: Glycyl lysine isopeptide (Lys-Gly) (interchain with G-Cter in ubiquitin). Positions 66–110 (VPTGGASSAAAGAAGAAAGGDAAEEEKEEEAKEESDDDMGFGLFD) are disordered. A compositionally biased stretch (low complexity) spans 69 to 86 (GGASSAAAGAAGAAAGGD). Over residues 87 to 104 (AAEEEKEEEAKEESDDDM) the composition is skewed to acidic residues. Ser-100 is subject to Phosphoserine.

It belongs to the eukaryotic ribosomal protein P1/P2 family. As to quaternary structure, component of the large ribosomal subunit (LSU). Mature yeast ribosomes consist of a small (40S) and a large (60S) subunit. The 40S small subunit contains 1 molecule of ribosomal RNA (18S rRNA) and 33 different proteins (encoded by 57 genes). The large 60S subunit contains 3 rRNA molecules (25S, 5.8S and 5S rRNA) and 46 different proteins (encoded by 81 genes). The 5 acidic ribosomal P-proteins form the stalk structure of the 60S subunit. They are organized as a pentameric complex in which uL10/P0 interacts with 2 heterodimers, P1A-P2B and P1B-P2A. In terms of processing, the N-terminus is not modified.

It is found in the cytoplasm. Its function is as follows. Component of the ribosome, a large ribonucleoprotein complex responsible for the synthesis of proteins in the cell. The small ribosomal subunit (SSU) binds messenger RNAs (mRNAs) and translates the encoded message by selecting cognate aminoacyl-transfer RNA (tRNA) molecules. The large subunit (LSU) contains the ribosomal catalytic site termed the peptidyl transferase center (PTC), which catalyzes the formation of peptide bonds, thereby polymerizing the amino acids delivered by tRNAs into a polypeptide chain. The nascent polypeptides leave the ribosome through a tunnel in the LSU and interact with protein factors that function in enzymatic processing, targeting, and the membrane insertion of nascent chains at the exit of the ribosomal tunnel. The chain is Large ribosomal subunit protein P2B from Saccharomyces cerevisiae (strain ATCC 204508 / S288c) (Baker's yeast).